The sequence spans 283 residues: Bifunctional protein FolD (283 aa).

NADP(+) is bound by residues 164–166 (GRS), S189, and T230.

This sequence belongs to the tetrahydrofolate dehydrogenase/cyclohydrolase family. Homodimer.

It carries out the reaction (6R)-5,10-methylene-5,6,7,8-tetrahydrofolate + NADP(+) = (6R)-5,10-methenyltetrahydrofolate + NADPH. The enzyme catalyses (6R)-5,10-methenyltetrahydrofolate + H2O = (6R)-10-formyltetrahydrofolate + H(+). The protein operates within one-carbon metabolism; tetrahydrofolate interconversion. Functionally, catalyzes the oxidation of 5,10-methylenetetrahydrofolate to 5,10-methenyltetrahydrofolate and then the hydrolysis of 5,10-methenyltetrahydrofolate to 10-formyltetrahydrofolate. The sequence is that of Bifunctional protein FolD from Dictyoglomus thermophilum (strain ATCC 35947 / DSM 3960 / H-6-12).